The following is a 192-amino-acid chain: Small ribosomal subunit protein uS5 (192 aa).

The region spanning 20–83 is the S5 DRBM domain; sequence FVDRLVHINR…EAAKRGLIRV (64 aa). The interval 165–192 is disordered; that stretch reads ARRGLKVSALQARRRDAEPGSADSADAA.

It belongs to the universal ribosomal protein uS5 family. Part of the 30S ribosomal subunit. Contacts proteins S4 and S8.

Functionally, with S4 and S12 plays an important role in translational accuracy. In terms of biological role, located at the back of the 30S subunit body where it stabilizes the conformation of the head with respect to the body. The polypeptide is Small ribosomal subunit protein uS5 (Methylobacterium sp. (strain 4-46)).